A 145-amino-acid polypeptide reads, in one-letter code: D-aminoacyl-tRNA deacylase (145 aa).

The short motif at Gly137–Pro138 is the Gly-cisPro motif, important for rejection of L-amino acids element.

It belongs to the DTD family. In terms of assembly, homodimer.

The protein resides in the cytoplasm. The enzyme catalyses glycyl-tRNA(Ala) + H2O = tRNA(Ala) + glycine + H(+). It catalyses the reaction a D-aminoacyl-tRNA + H2O = a tRNA + a D-alpha-amino acid + H(+). In terms of biological role, an aminoacyl-tRNA editing enzyme that deacylates mischarged D-aminoacyl-tRNAs. Also deacylates mischarged glycyl-tRNA(Ala), protecting cells against glycine mischarging by AlaRS. Acts via tRNA-based rather than protein-based catalysis; rejects L-amino acids rather than detecting D-amino acids in the active site. By recycling D-aminoacyl-tRNA to D-amino acids and free tRNA molecules, this enzyme counteracts the toxicity associated with the formation of D-aminoacyl-tRNA entities in vivo and helps enforce protein L-homochirality. The protein is D-aminoacyl-tRNA deacylase of Shewanella amazonensis (strain ATCC BAA-1098 / SB2B).